Here is a 243-residue protein sequence, read N- to C-terminus: Zinc import ATP-binding protein ZnuC (243 aa).

The 218-residue stretch at 8–225 (LNLSNVSYYI…SEFQKLFGHH (218 aa)) folds into the ABC transporter domain. 40–47 (GPNGAGKS) provides a ligand contact to ATP.

It belongs to the ABC transporter superfamily. Zinc importer (TC 3.A.1.15.5) family. As to quaternary structure, the complex is composed of two ATP-binding proteins (ZnuC), two transmembrane proteins (ZnuB) and a solute-binding protein (ZnuA).

Its subcellular location is the cell inner membrane. The catalysed reaction is Zn(2+)(out) + ATP(in) + H2O(in) = Zn(2+)(in) + ADP(in) + phosphate(in) + H(+)(in). Functionally, part of the ABC transporter complex ZnuABC involved in zinc import. Responsible for energy coupling to the transport system. The sequence is that of Zinc import ATP-binding protein ZnuC from Psychrobacter cryohalolentis (strain ATCC BAA-1226 / DSM 17306 / VKM B-2378 / K5).